The sequence spans 187 residues: Elongation factor P (187 aa).

Belongs to the elongation factor P family.

The protein localises to the cytoplasm. It functions in the pathway protein biosynthesis; polypeptide chain elongation. Involved in peptide bond synthesis. Stimulates efficient translation and peptide-bond synthesis on native or reconstituted 70S ribosomes in vitro. Probably functions indirectly by altering the affinity of the ribosome for aminoacyl-tRNA, thus increasing their reactivity as acceptors for peptidyl transferase. The chain is Elongation factor P from Mycoplasmopsis pulmonis (strain UAB CTIP) (Mycoplasma pulmonis).